A 446-amino-acid chain; its full sequence is Tubulin beta-6 chain (446 aa).

Residues 1–4 (MREI) carry the MREI motif motif. Positions 11, 69, 138, 142, 143, and 144 each coordinate GTP. Mg(2+) is bound at residue Glu-69. Ser-172 carries the post-translational modification Phosphoserine; by CDK1. Residues Asn-204 and Asn-226 each coordinate GTP. At Glu-438 the chain carries 5-glutamyl polyglutamate.

Belongs to the tubulin family. In terms of assembly, dimer of alpha and beta chains. A typical microtubule is a hollow water-filled tube with an outer diameter of 25 nm and an inner diameter of 15 nM. Alpha-beta heterodimers associate head-to-tail to form protofilaments running lengthwise along the microtubule wall with the beta-tubulin subunit facing the microtubule plus end conferring a structural polarity. Microtubules usually have 13 protofilaments but different protofilament numbers can be found in some organisms and specialized cells. It depends on Mg(2+) as a cofactor. Some glutamate residues at the C-terminus are polyglutamylated, resulting in polyglutamate chains on the gamma-carboxyl group. Polyglutamylation plays a key role in microtubule severing by spastin (SPAST). SPAST preferentially recognizes and acts on microtubules decorated with short polyglutamate tails: severing activity by SPAST increases as the number of glutamates per tubulin rises from one to eight, but decreases beyond this glutamylation threshold. Glutamylation is also involved in cilia motility. Post-translationally, some glutamate residues at the C-terminus are monoglycylated but not polyglycylated due to the absence of functional TTLL10 in human. Monoglycylation is mainly limited to tubulin incorporated into cilia and flagella axonemes, which is required for their stability and maintenance. Flagella glycylation controls sperm motility. Both polyglutamylation and monoglycylation can coexist on the same protein on adjacent residues, and lowering glycylation levels increases polyglutamylation, and reciprocally. In terms of processing, phosphorylated on Ser-172 by CDK1 during the cell cycle, from metaphase to telophase, but not in interphase. This phosphorylation inhibits tubulin incorporation into microtubules. As to expression, ubiquitous. Maximal expression in breast and lung, where it represents around 10% of all beta-tubulins. Largely decreased expression in most cancerous tissues.

It localises to the cytoplasm. The protein resides in the cytoskeleton. In terms of biological role, tubulin is the major constituent of microtubules, a cylinder consisting of laterally associated linear protofilaments composed of alpha- and beta-tubulin heterodimers. Microtubules grow by the addition of GTP-tubulin dimers to the microtubule end, where a stabilizing cap forms. Below the cap, tubulin dimers are in GDP-bound state, owing to GTPase activity of alpha-tubulin. This Homo sapiens (Human) protein is Tubulin beta-6 chain (TUBB6).